A 1514-amino-acid polypeptide reads, in one-letter code: ABC transporter C family member 3 (1514 aa).

The next 10 helical transmembrane spans lie at 35–55, 83–103, 116–136, 153–173, 183–203, 325–345, 364–386, 439–459, 463–483, and 551–571; these read PLFLRWLSGFLHSVLLLVLFF, ALFCSLALSLLNLVLMSLSGF, LVSSLGFLLGMVSWGVLSICL, LWLVFYLVVSCYSLVVDFVMY, LLVFDIVAFIAAVFLGYVAVL, ILVTAFFAFIYTVASYVGPAL, YVLVITFFAAKIVECLSQRHWFF, WYMHDPWMVLLQVGLALWILY, GLASIAALVATIIVMLINFPF, and FVFWGAPTLVSVSTFGACILL. One can recognise an ABC transmembrane type-1 1 domain in the interval 325-606; it reads ILVTAFFAFI…LPDTISMIVQ (282 aa). Residues 640–863 form the ABC transporter 1 domain; that stretch reads VEVINSTLSW…GTDFMELIGA (224 aa). Residue 675–682 participates in ATP binding; it reads GTVGSGKS. A run of 5 helical transmembrane segments spans residues 940-960, 987-1007, 1077-1097, 1181-1201, and 1205-1225; these read YITLAYGGALVPFILLGQVLF, LSTLMIVYVALAFGSSLCILL, IGIIGVMSQVSWLVFLVFIPV, LSSLTFVFSLVFLVSIPTGVI, and LAGLAVTYGLSLNTLQAWLIW. The ABC transmembrane type-1 2 domain maps to 950 to 1232; it reads VPFILLGQVL…LIWTLCNLEN (283 aa). In terms of domain architecture, ABC transporter 2 spans 1271–1503; sequence IRDLQVRYAP…KSSSFSKLVA (233 aa). 1303 to 1310 is an ATP binding site; that stretch reads GRTGSGKS.

It belongs to the ABC transporter superfamily. ABCC family. Conjugate transporter (TC 3.A.1.208) subfamily. In terms of tissue distribution, ubiquitous.

It is found in the membrane. The enzyme catalyses ATP + H2O + xenobioticSide 1 = ADP + phosphate + xenobioticSide 2.. Glutathione-conjugate transport is inhibited by decyl-glutathione and, to a lower extent, by GS-GS, but not by GSH. All transports are inhibited by vanadate. Pump for glutathione S-conjugates. Mediates the transport of glutathione conjugates such as chlorodinitrobenzene-GS (DNB-GS), and of chlorophyll catabolites such as Bn-NCC-1. Also transports heavy metals such as cadmium (Cd). The polypeptide is ABC transporter C family member 3 (ABCC3) (Arabidopsis thaliana (Mouse-ear cress)).